Here is a 121-residue protein sequence, read N- to C-terminus: Large ribosomal subunit protein bL12 (121 aa).

Belongs to the bacterial ribosomal protein bL12 family. In terms of assembly, homodimer. Part of the ribosomal stalk of the 50S ribosomal subunit. Forms a multimeric L10(L12)X complex, where L10 forms an elongated spine to which 2 to 4 L12 dimers bind in a sequential fashion. Binds GTP-bound translation factors.

In terms of biological role, forms part of the ribosomal stalk which helps the ribosome interact with GTP-bound translation factors. Is thus essential for accurate translation. This is Large ribosomal subunit protein bL12 from Escherichia coli O81 (strain ED1a).